A 260-amino-acid polypeptide reads, in one-letter code: Pyridoxine 5'-phosphate synthase (260 aa).

3-amino-2-oxopropyl phosphate is bound by residues Asn10 and Arg21. The active-site Proton acceptor is His46. Positions 48 and 53 each coordinate 1-deoxy-D-xylulose 5-phosphate. Residue Glu76 is the Proton acceptor of the active site. Residue Thr113 participates in 1-deoxy-D-xylulose 5-phosphate binding. His204 serves as the catalytic Proton donor. 3-amino-2-oxopropyl phosphate-binding positions include Asp205 and 227-228 (GH).

Belongs to the PNP synthase family. As to quaternary structure, homooctamer; tetramer of dimers.

Its subcellular location is the cytoplasm. The enzyme catalyses 3-amino-2-oxopropyl phosphate + 1-deoxy-D-xylulose 5-phosphate = pyridoxine 5'-phosphate + phosphate + 2 H2O + H(+). Its pathway is cofactor biosynthesis; pyridoxine 5'-phosphate biosynthesis; pyridoxine 5'-phosphate from D-erythrose 4-phosphate: step 5/5. In terms of biological role, catalyzes the complicated ring closure reaction between the two acyclic compounds 1-deoxy-D-xylulose-5-phosphate (DXP) and 3-amino-2-oxopropyl phosphate (1-amino-acetone-3-phosphate or AAP) to form pyridoxine 5'-phosphate (PNP) and inorganic phosphate. The chain is Pyridoxine 5'-phosphate synthase from Xylella fastidiosa (strain 9a5c).